A 340-amino-acid chain; its full sequence is DnaJ homolog subfamily B member 1 (340 aa).

The region spanning 2 to 70 (GKDYYQTLGL…REIFDRYGEE (69 aa)) is the J domain. A disordered region spans residues 68–90 (GEEGLKGSGPSGGSSGGTNGTSF). The segment covering 73 to 86 (KGSGPSGGSSGGTN) has biased composition (gly residues). At Thr307 the chain carries Phosphothreonine.

As to quaternary structure, interacts with DNAJC3. Interacts with HSF1 (via transactivation domain); this interaction results in the inhibition of heat shock- and HSF1-induced transcriptional activity during the attenuation and recovery phase period of the heat shock response. Interacts with BAG3.

Its subcellular location is the cytoplasm. The protein localises to the nucleus. The protein resides in the nucleolus. Its function is as follows. Interacts with HSP70 and can stimulate its ATPase activity. Stimulates the association between HSC70 and HIP. Negatively regulates heat shock-induced HSF1 transcriptional activity during the attenuation and recovery phase period of the heat shock response. Stimulates ATP hydrolysis and the folding of unfolded proteins mediated by HSPA1A/B (in vitro). The polypeptide is DnaJ homolog subfamily B member 1 (DNAJB1) (Bos taurus (Bovine)).